A 278-amino-acid chain; its full sequence is Orotidine 5'-phosphate decarboxylase (278 aa).

K96 (proton donor) is an active-site residue.

This sequence belongs to the OMP decarboxylase family. Type 2 subfamily.

It catalyses the reaction orotidine 5'-phosphate + H(+) = UMP + CO2. It participates in pyrimidine metabolism; UMP biosynthesis via de novo pathway; UMP from orotate: step 2/2. This chain is Orotidine 5'-phosphate decarboxylase, found in Salinispora arenicola (strain CNS-205).